The sequence spans 475 residues: UDP-N-acetylmuramoylalanine--D-glutamate ligase (475 aa).

Residue 130 to 136 coordinates ATP; that stretch reads GTNGKTT.

Belongs to the MurCDEF family.

It localises to the cytoplasm. It catalyses the reaction UDP-N-acetyl-alpha-D-muramoyl-L-alanine + D-glutamate + ATP = UDP-N-acetyl-alpha-D-muramoyl-L-alanyl-D-glutamate + ADP + phosphate + H(+). It participates in cell wall biogenesis; peptidoglycan biosynthesis. Cell wall formation. Catalyzes the addition of glutamate to the nucleotide precursor UDP-N-acetylmuramoyl-L-alanine (UMA). The chain is UDP-N-acetylmuramoylalanine--D-glutamate ligase from Corynebacterium diphtheriae (strain ATCC 700971 / NCTC 13129 / Biotype gravis).